The primary structure comprises 276 residues: Borealin (276 aa).

The segment at 111 to 158 (KEAKSSANSEDENMAPLKSTMKKKKASKKAPSTSKKPRTLSISKQGGT) is disordered.

The protein belongs to the borealin family. Component of the CPC complex.

The protein localises to the nucleus. It localises to the chromosome. The protein resides in the centromere. Its subcellular location is the cytoplasm. It is found in the cytoskeleton. The protein localises to the spindle. Component of the chromosomal passenger complex (CPC), a complex that acts as a key regulator of mitosis. The CPC complex has essential functions at the centromere in ensuring correct chromosome alignment and segregation and is required for chromatin-induced microtubule stabilization and spindle assembly. The chain is Borealin (cdca8) from Danio rerio (Zebrafish).